The primary structure comprises 256 residues: Vesicle-associated protein 1-1 (256 aa).

Met1 is subject to N-acetylmethionine. Residues 1–232 (MSNIDLIGMS…RRESKKSQSG (232 aa)) lie on the Cytoplasmic side of the membrane. The residue at position 2 (Ser2) is an N-acetylserine; in Vesicle-associated protein 1-1, N-terminally processed. The MSP domain occupies 22–142 (LLTVEPLDLQ…EETKLRVTYV (121 aa)). The tract at residues 142-169 (VAPPRPPSPVHEGSEEGSSPRASVSDNG) is disordered. Ser149 is subject to Phosphoserine. A compositionally biased stretch (polar residues) spans 157–169 (EGSSPRASVSDNG). Residues 187–232 (HQENTSEARALITKLTEEKQSAIQLNNRLQRELDQLRRESKKSQSG) adopt a coiled-coil conformation. A helical; Anchor for type IV membrane protein transmembrane segment spans residues 233–253 (GIPFMYVLLVGLIGLILGYIM).

Belongs to the VAMP-associated protein (VAP) (TC 9.B.17) family. As to quaternary structure, homodimer or homooligomer. Interacts with the cowpea mosaic virus (CPMV) NTP-binding protein (NTB). Interacts with NET3C.

Its subcellular location is the endoplasmic reticulum membrane. The protein localises to the protein storage vacuole membrane. In terms of biological role, part of a membrane-cytoskeletal adapter complex that forms a bridge between the endoplasmic reticulum and the plasma membrane. Associates with microtubules. This Arabidopsis thaliana (Mouse-ear cress) protein is Vesicle-associated protein 1-1 (PVA11).